Consider the following 305-residue polypeptide: Translation initiation factor eIF2B subunit alpha (305 aa).

Lys-35 carries the post-translational modification N6-acetyllysine.

Belongs to the eIF-2B alpha/beta/delta subunits family. In terms of assembly, component of the translation initiation factor 2B (eIF2B) complex which is a heterodecamer of two sets of five different subunits: alpha, beta, gamma, delta and epsilon. Subunits alpha, beta and delta comprise a regulatory subcomplex and subunits epsilon and gamma comprise a catalytic subcomplex. Within the complex, the hexameric regulatory complex resides at the center, with the two heterodimeric catalytic subcomplexes bound on opposite sides.

Its subcellular location is the cytoplasm. The protein localises to the cytosol. Activated by the chemical integrated stress response (ISR) inhibitor ISRIB which stimulates guanine nucleotide exchange factor activity for both phosphorylated and unphosphorylated eIF2. Its function is as follows. Acts as a component of the translation initiation factor 2B (eIF2B) complex, which catalyzes the exchange of GDP for GTP on eukaryotic initiation factor 2 (eIF2) gamma subunit. Its guanine nucleotide exchange factor activity is repressed when bound to eIF2 complex phosphorylated on the alpha subunit, thereby limiting the amount of methionyl-initiator methionine tRNA available to the ribosome and consequently global translation is repressed. The chain is Translation initiation factor eIF2B subunit alpha (EIF2B1) from Macaca fascicularis (Crab-eating macaque).